A 374-amino-acid chain; its full sequence is tRNA-specific 2-thiouridylase MnmA (374 aa).

Residues glycine 13–serine 20 and methionine 39 each bind ATP. The segment at asparagine 99 to aspartate 101 is interaction with target base in tRNA. Residue cysteine 104 is the Nucleophile of the active site. A disulfide bridge links cysteine 104 with cysteine 201. Glycine 128 contacts ATP. The interval lysine 151–glutamine 153 is interaction with tRNA. Cysteine 201 acts as the Cysteine persulfide intermediate in catalysis. Positions arginine 313–tyrosine 314 are interaction with tRNA.

The protein belongs to the MnmA/TRMU family.

The protein resides in the cytoplasm. The catalysed reaction is S-sulfanyl-L-cysteinyl-[protein] + uridine(34) in tRNA + AH2 + ATP = 2-thiouridine(34) in tRNA + L-cysteinyl-[protein] + A + AMP + diphosphate + H(+). Functionally, catalyzes the 2-thiolation of uridine at the wobble position (U34) of tRNA, leading to the formation of s(2)U34. This Streptococcus equi subsp. zooepidemicus (strain MGCS10565) protein is tRNA-specific 2-thiouridylase MnmA.